Here is a 324-residue protein sequence, read N- to C-terminus: Ribosomal RNA small subunit methyltransferase H (324 aa).

Residues 41–43 (GGH), Asp-60, Tyr-87, Asp-111, and Gln-118 each bind S-adenosyl-L-methionine.

The protein belongs to the methyltransferase superfamily. RsmH family.

The protein resides in the cytoplasm. It carries out the reaction cytidine(1402) in 16S rRNA + S-adenosyl-L-methionine = N(4)-methylcytidine(1402) in 16S rRNA + S-adenosyl-L-homocysteine + H(+). In terms of biological role, specifically methylates the N4 position of cytidine in position 1402 (C1402) of 16S rRNA. This chain is Ribosomal RNA small subunit methyltransferase H, found in Nocardia farcinica (strain IFM 10152).